The sequence spans 245 residues: Ribosomal RNA large subunit methyltransferase E (245 aa).

S-adenosyl-L-methionine-binding residues include Gly-58, Trp-60, Asp-78, Asp-96, and Asp-123. Residue Lys-163 is the Proton acceptor of the active site.

It belongs to the class I-like SAM-binding methyltransferase superfamily. RNA methyltransferase RlmE family.

The protein resides in the cytoplasm. It catalyses the reaction uridine(2552) in 23S rRNA + S-adenosyl-L-methionine = 2'-O-methyluridine(2552) in 23S rRNA + S-adenosyl-L-homocysteine + H(+). In terms of biological role, specifically methylates the uridine in position 2552 of 23S rRNA at the 2'-O position of the ribose in the fully assembled 50S ribosomal subunit. This is Ribosomal RNA large subunit methyltransferase E from Methanocaldococcus jannaschii (strain ATCC 43067 / DSM 2661 / JAL-1 / JCM 10045 / NBRC 100440) (Methanococcus jannaschii).